The chain runs to 685 residues: Iron(3+)-hydroxamate import system permease protein FhuB (685 aa).

18 helical membrane passes run 35–55, 87–107, 120–140, 143–163, 172–192, 222–242, 265–285, 302–322, 328–348, 373–393, 416–436, 456–476, 479–499, 504–524, 553–573, 592–612, 632–652, and 660–680; these read ALLL…NFSV, LAIS…FQQV, VATG…PGAL, QFAA…VAWG, ILAG…LVIF, QLLG…LMGL, AIVL…IGLF, LMLA…IILW, MEVS…LWLL, LAFA…ALSF, WPRI…GCII, AAFG…GWLL, GSLG…RGGF, MLLA…MLQA, AIVM…LTIL, IALL…IGPL, MPHM…ADWC, and YQIP…IYLL.

The protein belongs to the binding-protein-dependent transport system permease family. FecCD subfamily. The complex is composed of two ATP-binding proteins (FhuC), a transmembrane protein (FhuB) and a solute-binding protein (FhuD).

It is found in the cell inner membrane. Part of the ABC transporter complex FhuCDB involved in iron(3+)-hydroxamate import. Responsible for the translocation of the substrate across the membrane. Involved in ferrioxamine-mediated iron(III) utilization. This Salmonella typhimurium (strain LT2 / SGSC1412 / ATCC 700720) protein is Iron(3+)-hydroxamate import system permease protein FhuB (fhuB).